The following is a 76-amino-acid chain: Translational regulator CsrA (76 aa).

This sequence belongs to the CsrA/RsmA family. As to quaternary structure, homodimer; the beta-strands of each monomer intercalate to form a hydrophobic core, while the alpha-helices form wings that extend away from the core.

It is found in the cytoplasm. Functionally, a translational regulator that binds mRNA to regulate translation initiation and/or mRNA stability. Usually binds in the 5'-UTR at or near the Shine-Dalgarno sequence preventing ribosome-binding, thus repressing translation. Its main target seems to be the major flagellin gene, while its function is anatagonized by FliW. The sequence is that of Translational regulator CsrA from Wolinella succinogenes (strain ATCC 29543 / DSM 1740 / CCUG 13145 / JCM 31913 / LMG 7466 / NCTC 11488 / FDC 602W) (Vibrio succinogenes).